Here is a 422-residue protein sequence, read N- to C-terminus: Vitamin D3 receptor B (422 aa).

A DNA-binding region (nuclear receptor) is located at residues 20-95 (PRICGVCGDK…IGMMKEFILT (76 aa)). Zn(2+) is bound by residues C23, C26, C40, C43, C59, C65, C75, and C78. 2 NR C4-type zinc fingers span residues 23–43 (CGVC…CEGC) and 59–78 (CPFN…CQAC). Residues 96 to 125 (DEEVQRKKELIQRRKDEEAHREAQKPRLSD) are hinge. Residues 106-128 (IQRRKDEEAHREAQKPRLSDEQR) are disordered. One can recognise an NR LBD domain in the interval 126-418 (EQRNIIDTLV…LTPLVLEVFG (293 aa)). Residue Y142 participates in calcitriol binding. The disordered stretch occupies residues 145–190 (SYSDFSRFRPPVREGPVTRSASRAASLHSLSDASSDSFSHSPESGD). Residues 163 to 185 (RSASRAASLHSLSDASSDSFSHS) show a composition bias toward low complexity. S234 serves as a coordination point for calcitriol. Residues 243–261 (KMIPGFRELTAEDQIALLK) are interaction with coactivator LXXLL motif. Calcitriol contacts are provided by R271, S275, H302, and H392. Residues 411-419 (PLVLEVFGG) carry the 9aaTAD motif.

It belongs to the nuclear hormone receptor family. In terms of assembly, homodimer in the absence of bound vitamin D3. Heterodimer with RXRA after vitamin D3 binding. Interacts with ncoa1 and possibly other coactivators, leading to a strong increase of transcription of target genes. As to expression, detected in embryo 24 to 48 hours after fertilization, and in intestinal bulb.

Its subcellular location is the nucleus. It localises to the cytoplasm. Functionally, nuclear receptor for calcitriol, the active form of vitamin D3 which mediates the action of this vitamin on cells. Enters the nucleus upon vitamin D3 binding where it forms heterodimers with the retinoid X receptor/RXR. The VDR-RXR heterodimers bind to specific response elements on DNA and activate the transcription of vitamin D3-responsive target genes. Recruited to promoters via its interaction with BAZ1B/WSTF which mediates the interaction with acetylated histones, an essential step for VDR-promoter association. Plays a central role in calcium homeostasis. The protein is Vitamin D3 receptor B (vdrb) of Danio rerio (Zebrafish).